The chain runs to 757 residues: Protein hunchback (757 aa).

2 disordered regions span residues 30 to 51 (EPGH…PIPS) and 171 to 213 (EKLQ…EDMK). Positions 39–51 (SVASSPRQSPIPS) are enriched in polar residues. Residues 197–213 (EPEKEHDQMSNSSEDMK) show a composition bias toward basic and acidic residues. 4 C2H2-type zinc fingers span residues 239-261 (YKCK…TRTH), 268-290 (LQCP…IRKH), 296-318 (FQCD…RKSH), and 324-348 (YRCA…KYGH). Disordered stretches follow at residues 367-416 (DVYG…VATS), 511-535 (EQLQ…YERK), and 602-694 (MTSP…APPS). Low complexity-rich tracts occupy residues 397-414 (VAAV…QPVA) and 512-521 (QLQQQNQQQS). The segment covering 522-531 (DNEEEDQDDE) has biased composition (acidic residues). The segment covering 651 to 694 (ANTSASSTASSSGNSSNASSNSNGNSSSNSSSNGTTSAVAAPPS) has biased composition (low complexity). 2 consecutive C2H2-type zinc fingers follow at residues 704-726 (YECK…MGYH) and 732-756 (FKCN…RNAH).

It belongs to the hunchback C2H2-type zinc-finger protein family.

The protein localises to the nucleus. Gap class segmentation protein that controls development of head structures. This chain is Protein hunchback (hb), found in Drosophila sechellia (Fruit fly).